The primary structure comprises 276 residues: ATP synthase subunit a (276 aa).

The next 7 helical transmembrane spans lie at 49–69 (KPML…FAAA), 109–129 (YLFT…IPFI), 137–157 (SGMV…AGIS), 173–193 (GIRG…NILV), 203–223 (FANM…GEYI), 232–252 (APVG…EMLI), and 253–273 (QFLQ…GAVA).

Belongs to the ATPase A chain family. As to quaternary structure, F-type ATPases have 2 components, CF(1) - the catalytic core - and CF(0) - the membrane proton channel. CF(1) has five subunits: alpha(3), beta(3), gamma(1), delta(1), epsilon(1). CF(0) has three main subunits: a(1), b(2) and c(9-12). The alpha and beta chains form an alternating ring which encloses part of the gamma chain. CF(1) is attached to CF(0) by a central stalk formed by the gamma and epsilon chains, while a peripheral stalk is formed by the delta and b chains.

Its subcellular location is the cell membrane. Functionally, key component of the proton channel; it plays a direct role in the translocation of protons across the membrane. The sequence is that of ATP synthase subunit a from Nocardioides sp. (strain ATCC BAA-499 / JS614).